A 199-amino-acid chain; its full sequence is CASP-like protein 2B1 (199 aa).

Residues 1 to 26 are Cytoplasmic-facing; it reads MSYLGVGLSPVNVAGTKMKLMDRKVR. Residues 27–47 traverse the membrane as a helical segment; that stretch reads LTELILRCSVCALALVAAILI. The Extracellular segment spans residues 48–69; the sequence is ATDTQVKEIFTIQKKAKYTDMK. A helical transmembrane segment spans residues 70–90; it reads ALVFLVVVNGIAAAYSLLHMV. At 91-106 the chain is on the cytoplasmic side; it reads RCVVGMMKGSVLFSKP. The helical transmembrane segment at 107-127 threads the bilayer; the sequence is LAWAIFSGDQAIAYLTVAGVA. Residues 128-164 are Extracellular-facing; the sequence is AAAQSAAFAKLGEPELQWMKICTIYGKFCNQVGEGIA. The helical transmembrane segment at 165–185 threads the bilayer; it reads TALLASIGMVLISSISAFALF. The Cytoplasmic segment spans residues 186 to 199; that stretch reads RLYGGNKAQQGSRW.

This sequence belongs to the Casparian strip membrane proteins (CASP) family. Homodimer and heterodimers.

The protein localises to the cell membrane. In Eutrema halophilum (Salt cress), this protein is CASP-like protein 2B1.